A 367-amino-acid polypeptide reads, in one-letter code: Alanine racemase (367 aa).

Lys40 serves as the catalytic Proton acceptor; specific for D-alanine. An N6-(pyridoxal phosphate)lysine modification is found at Lys40. Arg136 lines the substrate pocket. Catalysis depends on Tyr263, which acts as the Proton acceptor; specific for L-alanine. Met310 contacts substrate.

Belongs to the alanine racemase family. Requires pyridoxal 5'-phosphate as cofactor.

The enzyme catalyses L-alanine = D-alanine. It functions in the pathway amino-acid biosynthesis; D-alanine biosynthesis; D-alanine from L-alanine: step 1/1. Catalyzes the interconversion of L-alanine and D-alanine. May also act on other amino acids. The sequence is that of Alanine racemase (alr) from Streptococcus thermophilus (strain ATCC BAA-250 / LMG 18311).